An 86-amino-acid chain; its full sequence is Small ribosomal subunit protein bS20 (86 aa).

The protein belongs to the bacterial ribosomal protein bS20 family.

Its function is as follows. Binds directly to 16S ribosomal RNA. This is Small ribosomal subunit protein bS20 from Oceanobacillus iheyensis (strain DSM 14371 / CIP 107618 / JCM 11309 / KCTC 3954 / HTE831).